The sequence spans 199 residues: Recombination protein RecR (199 aa).

The segment at 57 to 72 adopts a C4-type zinc-finger fold; sequence CQSCRTYTEESLCPIC. Residues 81-176 enclose the Toprim domain; sequence STICVVETPA…VISRIAHGVP (96 aa).

It belongs to the RecR family.

Functionally, may play a role in DNA repair. It seems to be involved in an RecBC-independent recombinational process of DNA repair. It may act with RecF and RecO. The protein is Recombination protein RecR of Shewanella sp. (strain ANA-3).